The following is a 452-amino-acid chain: 2-succinylbenzoate--CoA ligase (452 aa).

Belongs to the ATP-dependent AMP-binding enzyme family. MenE subfamily.

The enzyme catalyses 2-succinylbenzoate + ATP + CoA = 2-succinylbenzoyl-CoA + AMP + diphosphate. It functions in the pathway quinol/quinone metabolism; 1,4-dihydroxy-2-naphthoate biosynthesis; 1,4-dihydroxy-2-naphthoate from chorismate: step 5/7. It participates in quinol/quinone metabolism; menaquinone biosynthesis. Its function is as follows. Converts 2-succinylbenzoate (OSB) to 2-succinylbenzoyl-CoA (OSB-CoA). This is 2-succinylbenzoate--CoA ligase from Haemophilus influenzae (strain ATCC 51907 / DSM 11121 / KW20 / Rd).